A 235-amino-acid chain; its full sequence is MVKTVNGEPLRHRPLQFNDIERVTEVSLLAFSDSATWKWRFKGMSSETMKALTMQLTRDAYFDPHVTCIVAYTDSNPYVGFLAFKKFPPDPNVSYRDWILKSLNKYYSNFLYWWYGAQIVQKRFHYNELQYGAALYKTGLLKNPKGFIHIHFVCVDPALQGNGVGGYLLDMAHDLADEYQIPCFLMASKMAFKMYEHLGYKTSVIANLVDEDTGELIRESPGMIREPKQPSSHET.

Residues Leu-82–Pro-221 enclose the N-acetyltransferase domain.

The protein belongs to the acetyltransferase family.

It localises to the golgi apparatus membrane. Its subcellular location is the endoplasmic reticulum membrane. This is an uncharacterized protein from Schizosaccharomyces pombe (strain 972 / ATCC 24843) (Fission yeast).